The primary structure comprises 204 residues: Glycerol-3-phosphate acyltransferase (204 aa).

The next 5 membrane-spanning stretches (helical) occupy residues 8–28 (ILIF…CYIF), 53–73 (VPAA…VVIA), 81–101 (FITA…IFFG), 116–136 (FGFS…VAII), and 155–175 (VIFT…IIIL).

The protein belongs to the PlsY family. Probably interacts with PlsX.

The protein resides in the cell inner membrane. The enzyme catalyses an acyl phosphate + sn-glycerol 3-phosphate = a 1-acyl-sn-glycero-3-phosphate + phosphate. It functions in the pathway lipid metabolism; phospholipid metabolism. Its function is as follows. Catalyzes the transfer of an acyl group from acyl-phosphate (acyl-PO(4)) to glycerol-3-phosphate (G3P) to form lysophosphatidic acid (LPA). This enzyme utilizes acyl-phosphate as fatty acyl donor, but not acyl-CoA or acyl-ACP. This Francisella tularensis subsp. holarctica (strain FTNF002-00 / FTA) protein is Glycerol-3-phosphate acyltransferase.